Here is a 682-residue protein sequence, read N- to C-terminus: Serine/threonine-protein kinase PAK 6 (682 aa).

Disordered regions lie at residues 1–30, 132–170, 200–256, and 270–367; these read MFRKKKKKRPEISAPQNFQHRVHTSFDPKE, SPQSEHTDPHGLYLSCNGGTPAGHRQVPWPEPQSPQALP, LQSS…QESS, and PATG…NLYL. The CRIB domain maps to 12-25; sequence ISAPQNFQHRVHTS. The linker stretch occupies residues 26–407; sequence FDPKEGKFVG…VVDQGDPRLL (382 aa). Polar residues-rich tracts occupy residues 270–279 and 297–334; these read PATGAASSSK and KDSSSNLVAKAQSLPSEQPMGTFSPLTTSDTSSPQKSL. A Protein kinase domain is found at 408 to 659; that stretch reads LDSYVKIGEG…AQELLDHPFL (252 aa). ATP-binding positions include 414 to 422 and Lys437; that span reads IGEGSTGIV. Residue Asp527 is the Proton acceptor of the active site. At Ser561 the chain carries Phosphoserine; by autocatalysis.

This sequence belongs to the protein kinase superfamily. STE Ser/Thr protein kinase family. STE20 subfamily. In terms of assembly, interacts tightly with GTP-bound but not GDP-bound CDC42/p21 and RAC1. Interacts with the androgen receptor AR. Interacts with IQGAP1 and PPM1B. Autophosphorylated. Phosphorylated by MAP2K6/MAPKK6, leading to PAK6 activation.

It localises to the cytoplasm. The protein localises to the nucleus. It carries out the reaction L-seryl-[protein] + ATP = O-phospho-L-seryl-[protein] + ADP + H(+). The catalysed reaction is L-threonyl-[protein] + ATP = O-phospho-L-threonyl-[protein] + ADP + H(+). Its function is as follows. Serine/threonine protein kinase that plays a role in the regulation of gene transcription. The kinase activity is induced by various effectors including AR or MAP2K6/MAPKK6. Phosphorylates the DNA-binding domain of androgen receptor/AR and thereby inhibits AR-mediated transcription. Also inhibits ESR1-mediated transcription. May play a role in cytoskeleton regulation by interacting with IQGAP1. May protect cells from apoptosis through phosphorylation of BAD. In Mus musculus (Mouse), this protein is Serine/threonine-protein kinase PAK 6 (Pak6).